The following is a 420-amino-acid chain: Gamma-glutamyl phosphate reductase (420 aa).

This sequence belongs to the gamma-glutamyl phosphate reductase family.

Its subcellular location is the cytoplasm. It carries out the reaction L-glutamate 5-semialdehyde + phosphate + NADP(+) = L-glutamyl 5-phosphate + NADPH + H(+). The protein operates within amino-acid biosynthesis; L-proline biosynthesis; L-glutamate 5-semialdehyde from L-glutamate: step 2/2. Its function is as follows. Catalyzes the NADPH-dependent reduction of L-glutamate 5-phosphate into L-glutamate 5-semialdehyde and phosphate. The product spontaneously undergoes cyclization to form 1-pyrroline-5-carboxylate. The protein is Gamma-glutamyl phosphate reductase of Neisseria gonorrhoeae (strain ATCC 700825 / FA 1090).